A 532-amino-acid chain; its full sequence is Membrane protein insertase YidC (532 aa).

A run of 5 helical transmembrane segments spans residues 7 to 27 (FFIFAFLFVSFLLWQAWQSQM), 336 to 356 (LTILYSIIGNWGFSIILITFI), 413 to 433 (GGFLPIFIQMPIFLSLYYMLI), 450 to 470 (LSSQDPYYVLPVIMGLTMFFI), and 492 to 512 (PVIFTAFFLWFPSGLVLYYII).

Belongs to the OXA1/ALB3/YidC family. Type 1 subfamily. Interacts with the Sec translocase complex via SecD. Specifically interacts with transmembrane segments of nascent integral membrane proteins during membrane integration.

The protein localises to the cell membrane. Its function is as follows. Required for the insertion and/or proper folding and/or complex formation of integral membrane proteins into the membrane. Involved in integration of membrane proteins that insert both dependently and independently of the Sec translocase complex, as well as at least some lipoproteins. Aids folding of multispanning membrane proteins. The polypeptide is Membrane protein insertase YidC (Buchnera aphidicola subsp. Acyrthosiphon pisum (strain 5A)).